Consider the following 690-residue polypeptide: Proprotein convertase subtilisin/kexin type 9 (690 aa).

A signal peptide spans 1 to 28; it reads MGTVSSRRSWWPLPLLLLLLLGPAGARA. The propeptide occupies 29 to 150; it reads QEDEDGDYEE…IEEDSSVFAQ (122 aa). The residue at position 36 (Y36) is a Sulfotyrosine. S45 is subject to Phosphoserine. In terms of domain architecture, Inhibitor I9 spans 75 to 147; that stretch reads TYVVVLKEET…VDYIEEDSSV (73 aa). The Peptidase S8 domain occupies 153-459; sequence PWNLERITPP…GWQLFCRTVW (307 aa). Residues D184 and H224 each act as charge relay system in the active site. Disulfide bonds link C221–C253 and C321–C356. S384 functions as the Charge relay system in the catalytic mechanism. A C-terminal domain region spans residues 448–690; that stretch reads GAGWQLFCRT…HLAQASQELQ (243 aa). Intrachain disulfides connect C455/C525, C475/C524, and C484/C507. N531 is a glycosylation site (N-linked (GlcNAc...) asparagine). 6 disulfide bridges follow: C532-C599, C550-C598, C560-C586, C606-C677, C624-C676, and C633-C652. S686 bears the Phosphoserine mark.

Belongs to the peptidase S8 family. Monomer. Can self-associate to form dimers and higher multimers which may have increased LDLR degrading activity. The precursor protein but not the mature protein may form multimers. Interacts with APOB, VLDLR, LRP8/APOER2 and BACE1. The full-length immature form (pro-PCSK9) interacts with SCNN1A, SCNN1B and SCNN1G. The pro-PCSK9 form (via C-terminal domain) interacts with LDLR. Interacts (via the C-terminal domain) with ANXA2 (via repeat Annexin 1); the interaction inhibits the degradation of LDLR. It depends on Ca(2+) as a cofactor. Cleavage by furin and PCSK5 generates a truncated inactive protein that is unable to induce LDLR degradation. In terms of processing, undergoes autocatalytic cleavage in the endoplasmic reticulum to release the propeptide from the N-terminus and the cleavage of the propeptide is strictly required for its maturation and activation. The cleaved propeptide however remains associated with the catalytic domain through non-covalent interactions, preventing potential substrates from accessing its active site. As a result, it is secreted from cells as a propeptide-containing, enzymatically inactive protein. Post-translationally, phosphorylation protects the propeptide against proteolysis.

It is found in the cytoplasm. The protein localises to the secreted. Its subcellular location is the endosome. The protein resides in the lysosome. It localises to the cell surface. It is found in the endoplasmic reticulum. The protein localises to the golgi apparatus. Its proteolytic activity is autoinhibited by the non-covalent binding of the propeptide to the catalytic domain. Inhibited by EGTA. Its function is as follows. Crucial player in the regulation of plasma cholesterol homeostasis. Binds to low-density lipid receptor family members: low density lipoprotein receptor (LDLR), very low density lipoprotein receptor (VLDLR), apolipoprotein E receptor (LRP1/APOER) and apolipoprotein receptor 2 (LRP8/APOER2), and promotes their degradation in intracellular acidic compartments. Acts via a non-proteolytic mechanism to enhance the degradation of the hepatic LDLR through a clathrin LDLRAP1/ARH-mediated pathway. May prevent the recycling of LDLR from endosomes to the cell surface or direct it to lysosomes for degradation. Can induce ubiquitination of LDLR leading to its subsequent degradation. Inhibits intracellular degradation of APOB via the autophagosome/lysosome pathway in a LDLR-independent manner. Involved in the disposal of non-acetylated intermediates of BACE1 in the early secretory pathway. Inhibits epithelial Na(+) channel (ENaC)-mediated Na(+) absorption by reducing ENaC surface expression primarily by increasing its proteasomal degradation. Regulates neuronal apoptosis via modulation of LRP8/APOER2 levels and related anti-apoptotic signaling pathways. The sequence is that of Proprotein convertase subtilisin/kexin type 9 (PCSK9) from Pongo pygmaeus (Bornean orangutan).